A 4518-amino-acid polypeptide reads, in one-letter code: Dynein axonemal heavy chain 11 (4518 aa).

The tract at residues 1-1857 is stem; sequence MAASVAAQEA…LVHICDAQFQ (1857 aa). AAA stretches follow at residues 1858 to 2079, 2139 to 2368, 2474 to 2721, and 2819 to 3068; these read YFYE…VLVV, QMVR…TSFK, TMDP…VFQG, and NYND…EGRH. Residues 1896–1903, 2177–2184, 2512–2519, and 2857–2864 contribute to the ATP site; these read GPAGTGKT, GNAGTGKS, GNAGVGKT, and GVGGSGKQ. Residues 3074-3405 form a stalk region; that stretch reads KSFLEQISLF…GQSIKSFEAQ (332 aa). The stretch at 3322 to 3391 forms a coiled coil; sequence LAQANLELAT…NRLVKELEVK (70 aa). 2 AAA regions span residues 3461–3688 and 3898–4124; these read LTDD…EIER and LRNF…VLYN.

It belongs to the dynein heavy chain family. As to quaternary structure, consists of at least two heavy chains and a number of intermediate and light chains. Interacts with CFAP45.

It localises to the cytoplasm. The protein localises to the cytoskeleton. The protein resides in the cilium axoneme. Functionally, force generating protein of respiratory cilia. Produces force towards the minus ends of microtubules. Dynein has ATPase activity; the force-producing power stroke is thought to occur on release of ADP. The protein is Dynein axonemal heavy chain 11 (DNAH11) of Sus scrofa (Pig).